A 151-amino-acid chain; its full sequence is Large ribosomal subunit protein bL17 (151 aa).

This sequence belongs to the bacterial ribosomal protein bL17 family. In terms of assembly, part of the 50S ribosomal subunit. Contacts protein L32.

The protein is Large ribosomal subunit protein bL17 of Chlorobium limicola (strain DSM 245 / NBRC 103803 / 6330).